The sequence spans 293 residues: Ribosomal RNA small subunit methyltransferase A (293 aa).

N29, L31, G56, E77, D102, and N127 together coordinate S-adenosyl-L-methionine.

The protein belongs to the class I-like SAM-binding methyltransferase superfamily. rRNA adenine N(6)-methyltransferase family. RsmA subfamily.

The protein localises to the cytoplasm. It carries out the reaction adenosine(1518)/adenosine(1519) in 16S rRNA + 4 S-adenosyl-L-methionine = N(6)-dimethyladenosine(1518)/N(6)-dimethyladenosine(1519) in 16S rRNA + 4 S-adenosyl-L-homocysteine + 4 H(+). In terms of biological role, specifically dimethylates two adjacent adenosines (A1518 and A1519) in the loop of a conserved hairpin near the 3'-end of 16S rRNA in the 30S particle. May play a critical role in biogenesis of 30S subunits. This Geobacillus thermodenitrificans (strain NG80-2) protein is Ribosomal RNA small subunit methyltransferase A.